A 311-amino-acid polypeptide reads, in one-letter code: Long form salivary protein D7L1 (311 aa).

The signal sequence occupies residues 1–16; the sequence is MKALIFLGAIIAGVLS. 2 cysteine pairs are disulfide-bonded: cysteine 34/cysteine 67 and cysteine 63/cysteine 120. Residues serine 146, arginine 149, tyrosine 153, and lysine 160 each contribute to the ADP site. 3 disulfide bridges follow: cysteine 170-cysteine 202, cysteine 183-cysteine 311, and cysteine 244-cysteine 258. Asparagine 281, tyrosine 282, and serine 283 together coordinate ADP.

The protein belongs to the PBP/GOBP family. Distal lateral and medial lobes of female mosquito salivary gland (at protein level). Expressed in the head and thorax of the female mosquitoes, where the salivary glands are located. Expressed in salivary gland. Not detected in the female mosquito abdomen. Not detected in the male mosquito tissues.

It localises to the secreted. Its function is as follows. Modulates blood feeding of female mosquitoes on vertebrate species by binding and sequestering different mediators involved in the host response. Binds adenine, adenosine, AMP, ADP and ATP, with the highest affinity to ATP and ADP. Inhibits agonist-induced platelet aggregation and hemostasis. This is Long form salivary protein D7L1 from Culex quinquefasciatus (Southern house mosquito).